A 496-amino-acid polypeptide reads, in one-letter code: RNA-binding motif protein, Y chromosome, family 1 member E (496 aa).

The 78-residue stretch at 8 to 85 (GKLFIGGLNR…KAIKVEQAKK (78 aa)) folds into the RRM domain. 2 disordered regions span residues 67–348 (DMNG…PHRD) and 453–496 (DQRN…SSRY). Low complexity-rich tracts occupy residues 97–114 (PASS…SARG) and 149–159 (PVKRGPSSRSG). Polar residues predominate over residues 175–184 (NSWMGSQGPM). Basic and acidic residues-rich tracts occupy residues 204 to 214 (RNDRMSTRHDG), 242 to 253 (DNGHSNRDEHSS), 276 to 289 (AYRD…DESY), 313 to 326 (GYRD…HESY), 335 to 348 (SSRE…PHRD), and 484 to 496 (GESR…SSRY).

Interacts with splicing factor proteins SFRS3/SRP20, TRA2B/SFRS10, KHDRBS1/SAM68 and KHDRBS3. As to expression, testis-specific.

The protein resides in the nucleus. In terms of biological role, RNA-binding protein which may be involved in spermatogenesis. Required for sperm development, possibly by participating in pre-mRNA splicing in the testis. This chain is RNA-binding motif protein, Y chromosome, family 1 member E (RBMY1E), found in Homo sapiens (Human).